We begin with the raw amino-acid sequence, 87 residues long: Large ribosomal subunit protein eL33 (87 aa).

It belongs to the eukaryotic ribosomal protein eL33 family.

The polypeptide is Large ribosomal subunit protein eL33 (Pyrococcus horikoshii (strain ATCC 700860 / DSM 12428 / JCM 9974 / NBRC 100139 / OT-3)).